Consider the following 389-residue polypeptide: DEAD-box ATP-dependent RNA helicase CshC (389 aa).

A Q motif motif is present at residues 1 to 26 (MIKDMQPFLQQAWEKAGFKELTEIQK). Residues 29-199 (IPTILEGQDV…RDLAVEPQLV (171 aa)) enclose the Helicase ATP-binding domain. 42-49 (SPTGTGKT) provides a ligand contact to ATP. Residues 147-150 (DEFD) carry the DEAD box motif. The Helicase C-terminal domain maps to 209–379 (LVEHTYIICE…TKPKAPKKKK (171 aa)). Residues 368-389 (VETKPKAPKKKKPAFTGKKKPR) form a disordered region. Residues 373 to 389 (KAPKKKKPAFTGKKKPR) show a composition bias toward basic residues.

It carries out the reaction ATP + H2O = ADP + phosphate + H(+). Functionally, DEAD-box RNA helicase. Probably has an RNA-dependent ATPase activity and a 3' to 5' RNA helicase activity that uses the energy of ATP hydrolysis to destabilize and unwind short RNA duplexes. This chain is DEAD-box ATP-dependent RNA helicase CshC (cshC), found in Bacillus cereus (strain ATCC 14579 / DSM 31 / CCUG 7414 / JCM 2152 / NBRC 15305 / NCIMB 9373 / NCTC 2599 / NRRL B-3711).